We begin with the raw amino-acid sequence, 475 residues long: Lipid II flippase MurJ (475 aa).

The Cytoplasmic segment spans residues 1 to 2; the sequence is MS. The helical transmembrane segment at 3–23 threads the bilayer; sequence ILFSSILFSIATFFSRILGLF. Residues 24–35 are Periplasmic-facing; the sequence is RDVLFAKYFGVS. Residues 36–56 traverse the membrane as a helical segment; that stretch reads YELDAYFIAIMFPFFLRKVFG. At 57–78 the chain is on the cytoplasmic side; the sequence is EGAMSSAFVPLYSEKSGEEKDK. A helical transmembrane segment spans residues 79 to 99; the sequence is FLSSVINGFSLIILALVILSY. The Periplasmic segment spans residues 100-123; it reads FFPELIINLFGAGSSHETKILAKK. Residues 124-144 traverse the membrane as a helical segment; the sequence is LLLITSPSIYFIFLWAISYSI. The Cytoplasmic segment spans residues 145–150; that stretch reads LNTNNK. Residues 151–171 traverse the membrane as a helical segment; it reads FFWPALTPSISNITIIIGTFL. Residues 172–175 are Periplasmic-facing; sequence STKY. A helical transmembrane segment spans residues 176–196; it reads GIISPTIGFLIGSILMFFSII. The Cytoplasmic portion of the chain corresponds to 197-213; that stretch reads KSIIKHKYYFTIKHFPH. A helical membrane pass occupies residues 214-238; it reads FLKLFFPTFMTMVVSQINTVVDMNV. The Periplasmic portion of the chain corresponds to 239–249; that stretch reads VSFYDKGSISY. A helical transmembrane segment spans residues 250–271; the sequence is LQYASRFYLLPYGLFAVSVSTV. The Cytoplasmic portion of the chain corresponds to 272 to 287; it reads VLSKISNDRKNFNYHL. A helical transmembrane segment spans residues 288–308; it reads NDALKTTLFFTIPSMVGLIFL. Residues 309–332 lie on the Periplasmic side of the membrane; it reads STPIIRFFYEHGAFTSKDTLITSK. The helical transmembrane segment at 333-353 threads the bilayer; sequence ILIAYTLGLPFYGIYSTISRS. The Cytoplasmic portion of the chain corresponds to 354-362; that stretch reads YHAIKNTKT. A helical transmembrane segment spans residues 363 to 383; it reads PFIAATIVSLSNIILDIIFGL. Residues 384–386 are Periplasmic-facing; it reads KYG. A helical membrane pass occupies residues 387 to 407; the sequence is PIGVALATSIAGIIGVLYLLF. The Cytoplasmic segment spans residues 408 to 416; it reads SVKTFPIKD. A helical membrane pass occupies residues 417 to 437; the sequence is FLKISLNSLIMLFVIYLTDFT. Residues 438–440 lie on the Periplasmic side of the membrane; that stretch reads DNE. The helical transmembrane segment at 441-461 threads the bilayer; sequence FWFLIQILIGILVYLIFSSIF. Over 462-475 the chain is Cytoplasmic; that stretch reads YRDLIRRFLYARKK.

This sequence belongs to the MurJ/MviN family.

It localises to the cell inner membrane. The protein operates within cell wall biogenesis; peptidoglycan biosynthesis. Involved in peptidoglycan biosynthesis. Transports lipid-linked peptidoglycan precursors from the inner to the outer leaflet of the cytoplasmic membrane. This chain is Lipid II flippase MurJ, found in Thermosipho africanus (strain TCF52B).